The sequence spans 467 residues: 26S proteasome regulatory subunit 7 homolog (467 aa).

Disordered regions lie at residues 1 to 26 and 108 to 140; these read MPPKEDWEKYKAPLEDDDKKPDDDKI and GNGESDETTTDNNNSGNSNSNSNQQSTDADEDD. Residues 117–134 are compositionally biased toward low complexity; that stretch reads TDNNNSGNSNSNSNQQST. Residues serine 164 and serine 231 each carry the phosphoserine modification. 250–257 is a binding site for ATP; the sequence is GPPGTGKT.

It belongs to the AAA ATPase family. As to quaternary structure, interacts with UBR1 and CIC1. In terms of processing, the N-terminus is blocked.

It is found in the cytoplasm. The protein localises to the nucleus. Its function is as follows. The 26S proteasome is involved in the ATP-dependent degradation of ubiquitinated proteins. The regulatory (or ATPase) complex confers ATP dependency and substrate specificity to the 26S complex. This Saccharomyces cerevisiae (strain ATCC 204508 / S288c) (Baker's yeast) protein is 26S proteasome regulatory subunit 7 homolog (RPT1).